The following is a 127-amino-acid chain: Large ribosomal subunit protein bL12 (127 aa).

The protein belongs to the bacterial ribosomal protein bL12 family. In terms of assembly, homodimer. Part of the ribosomal stalk of the 50S ribosomal subunit. Forms a multimeric L10(L12)X complex, where L10 forms an elongated spine to which 2 to 4 L12 dimers bind in a sequential fashion. Binds GTP-bound translation factors.

Its function is as follows. Forms part of the ribosomal stalk which helps the ribosome interact with GTP-bound translation factors. Is thus essential for accurate translation. The chain is Large ribosomal subunit protein bL12 from Sinorhizobium fredii (strain NBRC 101917 / NGR234).